The sequence spans 317 residues: Lactamase-like protein adaB (317 aa).

Residues His97, His99, Asp101, and His102 each contribute to the Zn(2+) site. Asp101 serves as the catalytic Proton donor/acceptor.

Belongs to the metallo-beta-lactamase superfamily. The cofactor is Zn(2+).

It carries out the reaction 3-(2,4-dioxopentyl)-2,3,6,8,9-pentahydroxy-1-oxo-1,2,3,4-tetrahydroanthracene-2-carboxyl-[ACP] = 2-acetyl-3,4a,8,10,11,12a-hexahydroxy-1,4,4a,5,12,12a-hexahydrotetracene-1,12-dione + holo-[ACP] + H(+). Its pathway is secondary metabolite biosynthesis. Lactamase-like protein; part of the gene cluster that mediates the biosynthesis of the linear tetracyclic TAN-1612 neuropeptide Y receptor antagonist. The decaketide backbone of TAN-1612 is synthesized by the non-reducing polyketide synthase adaA via condensation of one acetyl-CoA starter unit with 9 malonyl-CoA units. The FAD-dependent monooxygenase adaC then performs hydroxylation at C2 while the polaketide chain is still attached to the NRPKS adaA. The alpha-hydroxylation step at C2 appears to be crucial for the following C18-C1 Claisen cyclization and release of the C9-hydroxyl version of TAN-1612 from the NRPKS adaA, two steps performed by the lactamase-like protein adaB. Finally, the O-methyltransferase adaD performs the C9 O-methylation to complete the biosynthesis of TAN-1612. The polypeptide is Lactamase-like protein adaB (Aspergillus niger (strain ATCC MYA-4892 / CBS 513.88 / FGSC A1513)).